The following is a 317-amino-acid chain: Acetyl-coenzyme A carboxylase carboxyl transferase subunit alpha (317 aa).

One can recognise a CoA carboxyltransferase C-terminal domain in the interval 39-293; the sequence is RLESRVNDAM…GDVIAKALAD (255 aa).

This sequence belongs to the AccA family. As to quaternary structure, acetyl-CoA carboxylase is a heterohexamer composed of biotin carboxyl carrier protein (AccB), biotin carboxylase (AccC) and two subunits each of ACCase subunit alpha (AccA) and ACCase subunit beta (AccD).

The protein resides in the cytoplasm. The enzyme catalyses N(6)-carboxybiotinyl-L-lysyl-[protein] + acetyl-CoA = N(6)-biotinyl-L-lysyl-[protein] + malonyl-CoA. Its pathway is lipid metabolism; malonyl-CoA biosynthesis; malonyl-CoA from acetyl-CoA: step 1/1. Its function is as follows. Component of the acetyl coenzyme A carboxylase (ACC) complex. First, biotin carboxylase catalyzes the carboxylation of biotin on its carrier protein (BCCP) and then the CO(2) group is transferred by the carboxyltransferase to acetyl-CoA to form malonyl-CoA. The chain is Acetyl-coenzyme A carboxylase carboxyl transferase subunit alpha from Agrobacterium fabrum (strain C58 / ATCC 33970) (Agrobacterium tumefaciens (strain C58)).